Reading from the N-terminus, the 503-residue chain is MNFFPWLTIIVVFPIFAGSIVFFLPHKGNRVIRWYTLCICILELLITTYTFCFHFQVDDPLIQLEETYKWINFFDCHWRLGIDGLSVGPILLTGFITTLATLAARPVTRDSRLFHFLMLAMYSGQIGLFASRDLFLFFIMWELELIPVYLLLSMWGGKKRLYSATKFILYTAGGSIFLLMGVLGLTLYGSNEPTFNFETSVNQSYPAALEIIFYIGFFIAFAVKSPILPLHTWLPDTHGEAHYSTCMLLAGILLKMGAYGLIRINMELFPHAHSLFSPYLVIVGTIQMIYAALTSLGQRNLKRRIAYSSVSHMGFIIIGIGSMTDTGLNGALLQIISHGFIGAALFFLAGTTYDRIRLVYLDEMGGIAIQMPKIFTMFSSFSMASLALPGMSGFVAELLVFFGIISAKKYLFMSKILISFVMAIGIILTPIYSLSMLRQMFYGYKLFNAPNSSFLDSGPRELFLSISILLPVIGIGMYPDFVLSLSVEKVEVILSHFFYRQVL.

14 helical membrane-spanning segments follow: residues 3-23 (FFPW…IVFF), 37-57 (LCIC…HFQV), 84-104 (GLSV…TLAA), 113-130 (LFHF…GLFA), 134-154 (LFLF…LLSM), 167-187 (FILY…GLTL), 208-228 (ALEI…SPIL), 242-262 (HYST…YGLI), 274-294 (SLFS…AALT), 305-325 (IAYS…SMTD), 330-350 (GALL…FLAG), 385-405 (SLAL…FGII), 416-436 (ILIS…SLSM), and 462-482 (LFLS…PDFV).

It belongs to the complex I subunit 4 family.

Its subcellular location is the plastid. It is found in the chloroplast thylakoid membrane. It carries out the reaction a plastoquinone + NADH + (n+1) H(+)(in) = a plastoquinol + NAD(+) + n H(+)(out). The catalysed reaction is a plastoquinone + NADPH + (n+1) H(+)(in) = a plastoquinol + NADP(+) + n H(+)(out). The chain is NAD(P)H-quinone oxidoreductase chain 4, chloroplastic from Ipomoea purpurea (Common morning glory).